Here is a 313-residue protein sequence, read N- to C-terminus: D-alanine--D-alanine ligase (313 aa).

The region spanning 108–308 (KLVWQQTGVP…YSELVVKVLS (201 aa)) is the ATP-grasp domain. Residue 138-193 (VAKLGLPLFVKPASEGSSVAVLKVKTADALPAALEEAATHDKIVIVEKSIEGGGEY) participates in ATP binding. Mg(2+) contacts are provided by Asp-262, Glu-275, and Asn-277.

The protein belongs to the D-alanine--D-alanine ligase family. Requires Mg(2+) as cofactor. The cofactor is Mn(2+).

The protein localises to the cytoplasm. It catalyses the reaction 2 D-alanine + ATP = D-alanyl-D-alanine + ADP + phosphate + H(+). Its pathway is cell wall biogenesis; peptidoglycan biosynthesis. In terms of biological role, cell wall formation. This Burkholderia cenocepacia (strain ATCC BAA-245 / DSM 16553 / LMG 16656 / NCTC 13227 / J2315 / CF5610) (Burkholderia cepacia (strain J2315)) protein is D-alanine--D-alanine ligase.